Consider the following 356-residue polypeptide: Myricetin 7/4'-O-methyltransferase 2 (356 aa).

Asp222 contributes to the S-adenosyl-L-methionine binding site. The Proton acceptor role is filled by His260.

It belongs to the class I-like SAM-binding methyltransferase superfamily. Cation-independent O-methyltransferase family. As to quaternary structure, homodimer.

The enzyme catalyses quercetin + S-adenosyl-L-methionine = rhamnetin + S-adenosyl-L-homocysteine + H(+). It carries out the reaction kaempferol + S-adenosyl-L-methionine = kaempferide + S-adenosyl-L-homocysteine + H(+). It catalyses the reaction myricetin + S-adenosyl-L-methionine = 7-O-methylmyricetin + S-adenosyl-L-homocysteine + H(+). The catalysed reaction is kaempferide + S-adenosyl-L-methionine = 7,4'-O-dimethylkaempferol + S-adenosyl-L-homocysteine + H(+). The enzyme catalyses isorhamnetin + S-adenosyl-L-methionine = 3',4'-O-dimethylquercetin + S-adenosyl-L-homocysteine + 2 H(+). It carries out the reaction 3',4',5,7-tetrahydroxy-3-methoxyflavone + S-adenosyl-L-methionine = 3',4',5-trihydroxy-3,7-dimethoxyflavone + S-adenosyl-L-homocysteine + H(+). It catalyses the reaction rhamnetin + S-adenosyl-L-methionine = 7,4'-O-dimethylquercetin + S-adenosyl-L-homocysteine + H(+). The catalysed reaction is syringetin + S-adenosyl-L-methionine = 7,3',5'-O-trimethylmyricetin + S-adenosyl-L-homocysteine + H(+). The enzyme catalyses 3',4',5'-O-trimethylmyricetin + S-adenosyl-L-methionine = 7,3',4',5'-O-tetramethylmyricetin + S-adenosyl-L-homocysteine. It functions in the pathway flavonoid metabolism. In terms of biological role, flavonoid 7/4'-O-methyltransferase involved in the biosynthesis of polymethoxylated flavonoids natural products such as myricetin derivatives, aroma compounds possessing antioxidant properties and exhibiting pharmacological activities such as anti-carcinogen, anti-viral, anti-thrombotic, anti-diabetic, anti-atherosclerotic, and anti-inflammatory effects. Catalyzes S-adenosylmethionine-dependent regioselective 7/4'-O-methylation of flavonoids; active on various hydroxylated flavonoid substrates. This is Myricetin 7/4'-O-methyltransferase 2 from Solanum lycopersicum (Tomato).